Here is a 1155-residue protein sequence, read N- to C-terminus: DNA-directed RNA polymerase subunit beta (1155 aa).

The protein belongs to the RNA polymerase beta chain family. In terms of assembly, the RNAP catalytic core consists of 2 alpha, 1 beta, 1 beta' and 1 omega subunit. When a sigma factor is associated with the core the holoenzyme is formed, which can initiate transcription.

The enzyme catalyses RNA(n) + a ribonucleoside 5'-triphosphate = RNA(n+1) + diphosphate. DNA-dependent RNA polymerase catalyzes the transcription of DNA into RNA using the four ribonucleoside triphosphates as substrates. The chain is DNA-directed RNA polymerase subunit beta from Borrelia hermsii (strain HS1 / DAH).